A 313-amino-acid chain; its full sequence is Pyrimidine-specific ribonucleoside hydrolase RihB (313 aa).

Residue D11 is the Proton acceptor of the active site. Residues D11, D16, and V124 each coordinate Ca(2+). Residues Q227 and H239 each coordinate substrate. Residue D240 participates in Ca(2+) binding.

The protein belongs to the IUNH family. RihB subfamily. As to quaternary structure, homotetramer. It depends on Ca(2+) as a cofactor.

It carries out the reaction a pyrimidine ribonucleoside + H2O = a pyrimidine nucleobase + D-ribose. Its function is as follows. Hydrolyzes cytidine or uridine to ribose and cytosine or uracil, respectively. Has a clear preference for cytidine over uridine. Strictly specific for ribonucleosides. The protein is Pyrimidine-specific ribonucleoside hydrolase RihB of Escherichia coli O9:H4 (strain HS).